Reading from the N-terminus, the 389-residue chain is Alanine racemase 1 (389 aa).

The Proton acceptor; specific for D-alanine role is filled by Lys-41. Lys-41 bears the N6-(pyridoxal phosphate)lysine mark. Arg-137 contributes to the substrate binding site. The Proton acceptor; specific for L-alanine role is filled by Tyr-266. Met-313 serves as a coordination point for substrate.

It belongs to the alanine racemase family. Pyridoxal 5'-phosphate is required as a cofactor.

It catalyses the reaction L-alanine = D-alanine. It participates in amino-acid biosynthesis; D-alanine biosynthesis; D-alanine from L-alanine: step 1/1. Functionally, catalyzes the interconversion of L-alanine and D-alanine. May also act on other amino acids. The sequence is that of Alanine racemase 1 (alr1) from Bacillus subtilis (strain 168).